Here is a 155-residue protein sequence, read N- to C-terminus: Deoxyuridine 5'-triphosphate nucleotidohydrolase (155 aa).

Substrate contacts are provided by residues 75–77, Asn-88, and 92–94; these read RSG and TVD.

This sequence belongs to the dUTPase family. Mg(2+) serves as cofactor.

The catalysed reaction is dUTP + H2O = dUMP + diphosphate + H(+). The protein operates within pyrimidine metabolism; dUMP biosynthesis; dUMP from dCTP (dUTP route): step 2/2. Its function is as follows. This enzyme is involved in nucleotide metabolism: it produces dUMP, the immediate precursor of thymidine nucleotides and it decreases the intracellular concentration of dUTP so that uracil cannot be incorporated into DNA. The sequence is that of Deoxyuridine 5'-triphosphate nucleotidohydrolase from Caulobacter vibrioides (strain ATCC 19089 / CIP 103742 / CB 15) (Caulobacter crescentus).